The chain runs to 330 residues: tRNA U34 carboxymethyltransferase (330 aa).

Carboxy-S-adenosyl-L-methionine is bound by residues Lys91, Trp105, Lys110, Gly130, 152 to 154 (DPS), 181 to 182 (IE), Met196, Tyr200, and Arg315.

Belongs to the class I-like SAM-binding methyltransferase superfamily. CmoB family. In terms of assembly, homotetramer.

It catalyses the reaction carboxy-S-adenosyl-L-methionine + 5-hydroxyuridine(34) in tRNA = 5-carboxymethoxyuridine(34) in tRNA + S-adenosyl-L-homocysteine + H(+). Functionally, catalyzes carboxymethyl transfer from carboxy-S-adenosyl-L-methionine (Cx-SAM) to 5-hydroxyuridine (ho5U) to form 5-carboxymethoxyuridine (cmo5U) at position 34 in tRNAs. The polypeptide is tRNA U34 carboxymethyltransferase (Shewanella pealeana (strain ATCC 700345 / ANG-SQ1)).